A 281-amino-acid polypeptide reads, in one-letter code: Pantothenate synthetase (281 aa).

30-37 (MGYLHEGH) is an ATP binding site. His37 (proton donor) is an active-site residue. Gln61 serves as a coordination point for (R)-pantoate. Gln61 is a beta-alanine binding site. Residue 147 to 150 (GEKD) participates in ATP binding. Residue Gln153 participates in (R)-pantoate binding. ATP is bound by residues Ile176 and 184 to 187 (KSSR).

It belongs to the pantothenate synthetase family. As to quaternary structure, homodimer.

It localises to the cytoplasm. It catalyses the reaction (R)-pantoate + beta-alanine + ATP = (R)-pantothenate + AMP + diphosphate + H(+). The protein operates within cofactor biosynthesis; (R)-pantothenate biosynthesis; (R)-pantothenate from (R)-pantoate and beta-alanine: step 1/1. Catalyzes the condensation of pantoate with beta-alanine in an ATP-dependent reaction via a pantoyl-adenylate intermediate. The polypeptide is Pantothenate synthetase (Clostridium botulinum (strain 657 / Type Ba4)).